We begin with the raw amino-acid sequence, 599 residues long: uncharacterized protein (599 aa).

Residues 1-10 (MEQQSENVYF) are compositionally biased toward polar residues. The disordered stretch occupies residues 1-146 (MEQQSENVYF…EPSFTLTELP (146 aa)). Over residues 11-20 (SGSESESLSD) the composition is skewed to low complexity. Positions 24–44 (RAQPQNQNSDNSRSASLTPPD) are enriched in polar residues. 2 stretches are compositionally biased toward acidic residues: residues 46–56 (SDLEDYVDSDS) and 89–114 (NGSD…EEED). The span at 118 to 127 (RSSSRSAMDI) shows a compositional bias: low complexity. Acidic residues predominate over residues 128–138 (SSEEDSGDDEP).

The protein belongs to the IIV-6 229L family.

This is an uncharacterized protein from Aedes vexans (Inland floodwater mosquito).